The following is a 525-amino-acid chain: GMP synthase [glutamine-hydrolyzing] (525 aa).

One can recognise a Glutamine amidotransferase type-1 domain in the interval 8 to 206 (PLLILDFGSQ…VVDICKASTD (199 aa)). C85 serves as the catalytic Nucleophile. Catalysis depends on residues H180 and E182. Residues 207–400 (WTPEHIIDEA…LGLPHDMVYR (194 aa)) form the GMPS ATP-PPase domain. 234 to 240 (SGGVDSS) is an ATP binding site.

Homodimer.

It catalyses the reaction XMP + L-glutamine + ATP + H2O = GMP + L-glutamate + AMP + diphosphate + 2 H(+). Its pathway is purine metabolism; GMP biosynthesis; GMP from XMP (L-Gln route): step 1/1. Functionally, catalyzes the synthesis of GMP from XMP. The sequence is that of GMP synthase [glutamine-hydrolyzing] from Legionella pneumophila (strain Paris).